The following is a 524-amino-acid chain: Anthranilate synthase component 1 (524 aa).

L-tryptophan-binding positions include Ser55 and 297-299 (PYM). Position 332-333 (332-333 (GT)) interacts with chorismate. A Mg(2+)-binding site is contributed by Glu359. Chorismate is bound by residues Tyr447, Arg467, 485 to 487 (GAG), and Gly487. Glu500 serves as a coordination point for Mg(2+).

This sequence belongs to the anthranilate synthase component I family. Heterotetramer consisting of two non-identical subunits: a beta subunit (TrpG) and a large alpha subunit (TrpE). Mg(2+) is required as a cofactor.

It carries out the reaction chorismate + L-glutamine = anthranilate + pyruvate + L-glutamate + H(+). Its pathway is amino-acid biosynthesis; L-tryptophan biosynthesis; L-tryptophan from chorismate: step 1/5. With respect to regulation, feedback inhibited by tryptophan. In terms of biological role, part of a heterotetrameric complex that catalyzes the two-step biosynthesis of anthranilate, an intermediate in the biosynthesis of L-tryptophan. In the first step, the glutamine-binding beta subunit (TrpG) of anthranilate synthase (AS) provides the glutamine amidotransferase activity which generates ammonia as a substrate that, along with chorismate, is used in the second step, catalyzed by the large alpha subunit of AS (TrpE) to produce anthranilate. In the absence of TrpG, TrpE can synthesize anthranilate directly from chorismate and high concentrations of ammonia. The polypeptide is Anthranilate synthase component 1 (trpE) (Haloferax volcanii (strain ATCC 29605 / DSM 3757 / JCM 8879 / NBRC 14742 / NCIMB 2012 / VKM B-1768 / DS2) (Halobacterium volcanii)).